A 248-amino-acid chain; its full sequence is DNA polymerase sliding clamp (248 aa).

This sequence belongs to the PCNA family. In terms of assembly, homotrimer. The subunits circularize to form a toroid; DNA passes through its center. Replication factor C (RFC) is required to load the toroid on the DNA.

In terms of biological role, sliding clamp subunit that acts as a moving platform for DNA processing. Responsible for tethering the catalytic subunit of DNA polymerase and other proteins to DNA during high-speed replication. The polypeptide is DNA polymerase sliding clamp (Nitrosopumilus maritimus (strain SCM1)).